Here is a 615-residue protein sequence, read N- to C-terminus: 1-deoxy-D-xylulose-5-phosphate synthase (615 aa).

Thiamine diphosphate contacts are provided by residues H72 and 111 to 113; that span reads GHS. Mg(2+) is bound at residue D142. Thiamine diphosphate-binding positions include 143-144, N171, Y278, and E360; that span reads GA. Residue N171 coordinates Mg(2+).

The protein belongs to the transketolase family. DXPS subfamily. As to quaternary structure, homodimer. It depends on Mg(2+) as a cofactor. Thiamine diphosphate serves as cofactor.

It carries out the reaction D-glyceraldehyde 3-phosphate + pyruvate + H(+) = 1-deoxy-D-xylulose 5-phosphate + CO2. It functions in the pathway metabolic intermediate biosynthesis; 1-deoxy-D-xylulose 5-phosphate biosynthesis; 1-deoxy-D-xylulose 5-phosphate from D-glyceraldehyde 3-phosphate and pyruvate: step 1/1. Functionally, catalyzes the acyloin condensation reaction between C atoms 2 and 3 of pyruvate and glyceraldehyde 3-phosphate to yield 1-deoxy-D-xylulose-5-phosphate (DXP). The chain is 1-deoxy-D-xylulose-5-phosphate synthase from Campylobacter jejuni subsp. jejuni serotype O:23/36 (strain 81-176).